A 146-amino-acid chain; its full sequence is Endothelial differentiation-related factor 1 homolog (146 aa).

Residues 13-53 (RKKGSAAQSKSKQAVTAAQRKGEAVETSKKWAAGQNKQHVV) form a disordered region. A compositionally biased stretch (low complexity) spans 17 to 31 (SAAQSKSKQAVTAAQ). Residues 32-41 (RKGEAVETSK) show a composition bias toward basic and acidic residues. In terms of domain architecture, HTH cro/C1-type spans 80-134 (IQQGRQNKGLTQKDLATKINEKPQIIAEYECGKAIPNNQVMGKIERAIGLKLRGK). The H-T-H motif DNA-binding region spans 91–110 (QKDLATKINEKPQIIAEYEC).

It localises to the nucleus. Its function is as follows. Probable transcriptional coactivator. The chain is Endothelial differentiation-related factor 1 homolog (edf1) from Danio rerio (Zebrafish).